Reading from the N-terminus, the 397-residue chain is Subtilisin-like protease 3 (397 aa).

A signal peptide spans Met-1–Ala-19. Positions Arg-20–Ala-116 are excised as a propeptide. The Inhibitor I9 domain maps to Ser-35–Ala-116. The 272-residue stretch at Thr-126–Arg-397 folds into the Peptidase S8 domain. Catalysis depends on charge relay system residues Asp-158 and His-189. Asn-250 carries an N-linked (GlcNAc...) asparagine glycan. Ser-344 (charge relay system) is an active-site residue. An N-linked (GlcNAc...) asparagine glycan is attached at Asn-393.

Belongs to the peptidase S8 family.

It is found in the secreted. Its function is as follows. Secreted subtilisin-like serine protease with keratinolytic activity that contributes to pathogenicity. The sequence is that of Subtilisin-like protease 3 (SUB3) from Arthroderma benhamiae (strain ATCC MYA-4681 / CBS 112371) (Trichophyton mentagrophytes).